We begin with the raw amino-acid sequence, 606 residues long: Adenine deaminase (606 aa).

It belongs to the metallo-dependent hydrolases superfamily. Adenine deaminase family. Requires Mn(2+) as cofactor.

The catalysed reaction is adenine + H2O + H(+) = hypoxanthine + NH4(+). The sequence is that of Adenine deaminase from Rubrobacter xylanophilus (strain DSM 9941 / JCM 11954 / NBRC 16129 / PRD-1).